A 771-amino-acid chain; its full sequence is Post-GPI attachment to proteins factor 6 (771 aa).

Residues 1–34 (MGRAGTGTGGEAVAAVVAGPLLLLLLARPPPASA) form the signal peptide. Residues 35–545 (GYSGKSEVGL…STAQTVAQQR (511 aa)) lie on the Extracellular side of the membrane. Asparagine 144 is a glycosylation site (N-linked (GlcNAc...) asparagine). The interval 322 to 343 (FNASSGLLSPSPDHQDLGRSGR) is disordered. A compositionally biased stretch (basic and acidic residues) spans 334–343 (DHQDLGRSGR). 2 N-linked (GlcNAc...) asparagine glycosylation sites follow: asparagine 407 and asparagine 431. One can recognise an EGF-like domain in the interval 497-533 (PCLNDCGPYGQCLLLRRHSYLYASCSCKAGWRGWSCT). Cystine bridges form between cysteine 498/cysteine 508, cysteine 502/cysteine 521, and cysteine 523/cysteine 532. Residues 546-566 (AATLLLTLSNLMFLAPIAVSV) traverse the membrane as a helical segment. Topologically, residues 567 to 568 (RR) are cytoplasmic. A helical membrane pass occupies residues 569 to 589 (FFLVEASVYAYTMFFSTFYHA). At 590 to 605 (CDQPGEAVLCILSYDT) the chain is on the extracellular side. A helical transmembrane segment spans residues 606-626 (LQYCDFLGSGAAIWVTILCMA). Over 627-629 (RLK) the chain is Cytoplasmic. A helical membrane pass occupies residues 630-650 (TVLKYVLFLLGTLVIAMSLQL). The Extracellular segment spans residues 651 to 653 (DRR). Residues 654–674 (GMWNMLGPCLFAFVIMASMWA) traverse the membrane as a helical segment. The Cytoplasmic segment spans residues 675 to 690 (YRCGHRRQCYPTSWQR). The chain crosses the membrane as a helical span at residues 691-711 (WAFYLLPGVSMASVGIAIYTS). The Extracellular portion of the chain corresponds to 712-717 (MMTSDN). A helical membrane pass occupies residues 718 to 738 (YYYTHSIWHILLAGSAALLLP). At 739–771 (PPDQPAEPWACSQKFPCHYQICKNDREELYAVT) the chain is on the cytoplasmic side.

It belongs to the TMEM8 family. Post-translationally, glycosylated. In terms of tissue distribution, expressed in pancreas, placenta, spleen, liver, kidney, bone marrow, peripheral blood leukocytes and tonsil.

The protein localises to the cell membrane. The protein resides in the lysosome membrane. The enzyme catalyses a 1,2-diacyl-sn-glycero-3-phosphocholine + H2O = a 1-acyl-sn-glycero-3-phosphocholine + a fatty acid + H(+). Involved in the lipid remodeling steps of GPI-anchor maturation. Lipid remodeling steps consist in the generation of 2 saturated fatty chains at the sn-2 position of GPI-anchor proteins (GPI-AP). Has phospholipase A2 activity that removes an acyl-chain at the sn-2 position of GPI-anchors during the remodeling of GPI. Required for the shedding of the GPI-AP CRIPTO, but not CFC1, at the cell surface. Shedding of CRIPTO modulates Nodal signaling by allowing soluble CRIPTO to act as a Nodal coreceptor on other cells. Also indirectly involved in the translocation of RAC1 from the cytosol to the plasma membrane by maintaining the steady state amount of CAV1-enriched plasma membrane subdomains, stabilizing RAC1 at the plasma membrane. In contrast to myomaker (TMEM8C), has no fusogenic activity. The chain is Post-GPI attachment to proteins factor 6 from Homo sapiens (Human).